We begin with the raw amino-acid sequence, 539 residues long: Chaperonin GroEL (539 aa).

ATP is bound by residues 29 to 32, 86 to 90, Gly-413, 477 to 479, and Asp-493; these read TLGP, DGTTT, and NAA.

It belongs to the chaperonin (HSP60) family. In terms of assembly, forms a cylinder of 14 subunits composed of two heptameric rings stacked back-to-back. Interacts with the co-chaperonin GroES.

Its subcellular location is the cytoplasm. The catalysed reaction is ATP + H2O + a folded polypeptide = ADP + phosphate + an unfolded polypeptide.. Functionally, together with its co-chaperonin GroES, plays an essential role in assisting protein folding. The GroEL-GroES system forms a nano-cage that allows encapsulation of the non-native substrate proteins and provides a physical environment optimized to promote and accelerate protein folding. In Leifsonia xyli subsp. xyli (strain CTCB07), this protein is Chaperonin GroEL.